The sequence spans 446 residues: D-inositol 3-phosphate glycosyltransferase (446 aa).

A disordered region spans residues 1-21 (MSHYVGRLGRRSPAGSGRLRL). H34 contacts 1D-myo-inositol 3-phosphate. UDP-N-acetyl-alpha-D-glucosamine-binding positions include 40–41 (QP) and G48. Residues 45–50 (DAGGMN), K103, Y136, T160, and R180 each bind 1D-myo-inositol 3-phosphate. UDP-N-acetyl-alpha-D-glucosamine-binding residues include R255, K260, and V321. Mg(2+) is bound by residues F330, R331, and A333. Residues E343 and E351 each contribute to the UDP-N-acetyl-alpha-D-glucosamine site. Residue T357 coordinates Mg(2+).

The protein belongs to the glycosyltransferase group 1 family. MshA subfamily. In terms of assembly, homodimer.

It carries out the reaction 1D-myo-inositol 3-phosphate + UDP-N-acetyl-alpha-D-glucosamine = 1D-myo-inositol 2-acetamido-2-deoxy-alpha-D-glucopyranoside 3-phosphate + UDP + H(+). Functionally, catalyzes the transfer of a N-acetyl-glucosamine moiety to 1D-myo-inositol 3-phosphate to produce 1D-myo-inositol 2-acetamido-2-deoxy-glucopyranoside 3-phosphate in the mycothiol biosynthesis pathway. The protein is D-inositol 3-phosphate glycosyltransferase of Streptomyces scabiei (strain 87.22).